A 101-amino-acid chain; its full sequence is Glutaredoxin-1 (101 aa).

The Glutaredoxin domain maps to 5–101; the sequence is KDRVEKLIQT…GSLSKMIAAL (97 aa). The cysteines at positions 25 and 28 are disulfide-linked.

It belongs to the glutaredoxin family.

It is found in the cytoplasm. It localises to the cytosol. In terms of biological role, multifunctional enzyme with glutathione-dependent oxidoreductase, glutathione peroxidase and glutathione S-transferase (GST) activity. The disulfide bond functions as an electron carrier in the glutathione-dependent synthesis of deoxyribonucleotides by the enzyme ribonucleotide reductase. In addition, it is also involved in reducing cytosolic protein- and non-protein-disulfides in a coupled system with glutathione reductase. May play a role in protection against oxidative stress caused by superoxide in vivo by regulating the redox state of the protein sulfhydryl groups. The sequence is that of Glutaredoxin-1 from Rhizophagus irregularis (strain DAOM 181602 / DAOM 197198 / MUCL 43194) (Arbuscular mycorrhizal fungus).